Reading from the N-terminus, the 841-residue chain is MSDISKYTPMMQQYLKIKEDYADAIVFFRLGDFYEMFFDDAITASKVLEITLTKKEAGQTVPMCGVPHHAAKVYIQKLITKGFKIAIVEQTSEPGKGLVEREVVQLITPGMIIDDDILPKNEYNFIGSVSLSEYGYILSYADISTGDTFILNGLTKQALTDEVSNLKLKEIVLTNTSDIYLLNFFKQESILVSIYTNQEVQNTRIVRNLKEKHLKEAGSLLINYLEKESKLDLSHLMPFESVIVDQYMRLDHQVLNHLELTESLTGNINSTLIQWIDKTSTAMGSRLLRYELTHPLKDKELLEKRYDYIEAFTQFEPRNKLESILEQVYDLNRLVGRVSSNQTHARDLVQLKTTLSLIPEFKEVLDSFDNPLIDEMNDKVDVFETLFQLLDASIENEPPLTVKEGGIIKDGYDETLDEFRSIAKNGDLWLEKFENEEKERTGIKNLKVGYNRVFGYFIEVSKGNIPLIQEEFGYIRKQTLANAERYITEDLKNAENKILSSKDRADKLEYEIFNQIKETAKTYTHELQLLSQIIASVDKYISLSKVAEMYKYVRPKLNHNRIVDIENGRHPVVEQHVEFIKNHIHMKPSEIFILTGPNMSGKSTYMRMFAVITVMAQTGMFVPATSANLPIYDAIFTRIGSSDDISGGKSTFMVEMVEANDALTYATENSLILFDEIGRGTATYDGLALAQAMIEYVHTQIKAQMMFSTHYHELTKLSEKHDLITNLHVKAIEQKDHMVFLHQVELGSSDKSYGIQVAALAHLPDPVIKRAKYLLKKLEKDGKGIDHNLFMFEEKVELGQIIPHDIQDLLNHINDLDINQMTPLDALIKLKYLQSLSKEKK.

Residue 596–603 coordinates ATP; it reads GPNMSGKS.

This sequence belongs to the DNA mismatch repair MutS family.

Its function is as follows. This protein is involved in the repair of mismatches in DNA. It is possible that it carries out the mismatch recognition step. This protein has a weak ATPase activity. The sequence is that of DNA mismatch repair protein MutS from Acholeplasma laidlawii (strain PG-8A).